Reading from the N-terminus, the 30-residue chain is L-amino-acid oxidase (30 aa).

The protein belongs to the flavin monoamine oxidase family. FIG1 subfamily. In terms of assembly, monomer. This is in contrast with most of its orthologs, that are non-covalently linked homodimers. FAD serves as cofactor. N-glycosylated. Expressed by the venom gland.

The protein localises to the secreted. It carries out the reaction an L-alpha-amino acid + O2 + H2O = a 2-oxocarboxylate + H2O2 + NH4(+). The enzyme catalyses L-leucine + O2 + H2O = 4-methyl-2-oxopentanoate + H2O2 + NH4(+). It catalyses the reaction L-phenylalanine + O2 + H2O = 3-phenylpyruvate + H2O2 + NH4(+). The catalysed reaction is L-tryptophan + O2 + H2O = indole-3-pyruvate + H2O2 + NH4(+). It carries out the reaction L-methionine + O2 + H2O = 4-methylsulfanyl-2-oxobutanoate + H2O2 + NH4(+). The enzyme catalyses L-2-aminohexanoate + O2 + H2O = 2-oxohexanoate + H2O2 + NH4(+). It catalyses the reaction L-tyrosine + O2 + H2O = 3-(4-hydroxyphenyl)pyruvate + H2O2 + NH4(+). Its function is as follows. Catalyzes an oxidative deamination of predominantly hydrophobic and aromatic L-amino acids, thus producing hydrogen peroxide that may contribute to the diverse toxic effects of this enzyme. Is highly active against L-Met, L-Leu, L-norleucine (L-2-aminohexanoate), L-Trp, L-Phe, moderately active against L-Tyr, and no active on L-Gly, L-Ala, L-Val, L-Pro, L-His, L-Lys, L-Arg, L-Asp, L-Asn, L-Gln, L-Glu, L-Ser, and L-Thr. Exhibits diverse biological activities, such as hemorrhage, hemolysis, edema, antibacterial and antiparasitic activities. In addition, this protein induces apoptosis. It also interacts with endothelial cells, and inhibits collagen- and ADP-induced platelet aggregation. L-LAAO family effects on platelets are controversial, since it either induces aggregation or inhibits agonist-induced aggregation. These different effects are probably due to different experimental conditions. In Bothrops leucurus (Whitetail lancehead), this protein is L-amino-acid oxidase.